Here is a 264-residue protein sequence, read N- to C-terminus: Phosphonoacetaldehyde hydrolase (264 aa).

Asp-9 serves as the catalytic Nucleophile. 2 residues coordinate Mg(2+): Asp-9 and Ala-11. The Schiff-base intermediate with substrate role is filled by Lys-50. Residue Asp-183 participates in Mg(2+) binding.

It belongs to the HAD-like hydrolase superfamily. PhnX family. As to quaternary structure, homodimer. Mg(2+) serves as cofactor.

It catalyses the reaction phosphonoacetaldehyde + H2O = acetaldehyde + phosphate + H(+). In terms of biological role, involved in phosphonate degradation. The sequence is that of Phosphonoacetaldehyde hydrolase from Bacillus cereus (strain AH187).